A 237-amino-acid chain; its full sequence is tRNA-splicing endonuclease subunit Sen2-1 (237 aa).

Catalysis depends on residues tyrosine 148, histidine 156, and lysine 190.

The protein belongs to the tRNA-intron endonuclease family. In terms of assembly, tRNA splicing endonuclease is a heterotetramer composed of SEN2, SEN15, SEN34/LENG5 and SEN54.

It is found in the nucleus. The enzyme catalyses pretRNA = a 3'-half-tRNA molecule with a 5'-OH end + a 5'-half-tRNA molecule with a 2',3'-cyclic phosphate end + an intron with a 2',3'-cyclic phosphate and a 5'-hydroxyl terminus.. In terms of biological role, constitutes one of the two catalytic subunit of the tRNA-splicing endonuclease complex, a complex responsible for identification and cleavage of the splice sites in pre-tRNA. It cleaves pre-tRNA at the 5'- and 3'-splice sites to release the intron. The products are an intron and two tRNA half-molecules bearing 2',3'-cyclic phosphate and 5'-OH termini. There are no conserved sequences at the splice sites, but the intron is invariably located at the same site in the gene, placing the splice sites an invariant distance from the constant structural features of the tRNA body. Probably carries the active site for 5'-splice site cleavage. This is tRNA-splicing endonuclease subunit Sen2-1 (SEN1) from Arabidopsis thaliana (Mouse-ear cress).